The chain runs to 131 residues: Small ribosomal subunit protein eS8 (131 aa).

A disordered region spans residues 15–36 (PSGGKKGRVRKTKKKALGGGPP). Residues 17–30 (GGKKGRVRKTKKKA) show a composition bias toward basic residues.

Belongs to the eukaryotic ribosomal protein eS8 family. Part of the 30S ribosomal subunit.

This is Small ribosomal subunit protein eS8 from Pyrobaculum calidifontis (strain DSM 21063 / JCM 11548 / VA1).